We begin with the raw amino-acid sequence, 104 residues long: Naphthalene 1,2-dioxygenase system, ferredoxin component (104 aa).

The 96-residue stretch at 6 to 101 folds into the Rieske domain; it reads IEAVALSDIL…VKIENLRVMI (96 aa). 4 residues coordinate [2Fe-2S] cluster: C45, H47, C64, and H67.

It belongs to the bacterial ring-hydroxylating dioxygenase ferredoxin component family. The naphthalene dioxygenase (NDO) multicomponent enzyme system is composed of an electron transfer component and a dioxygenase component (iron sulfur protein (ISP)). The electron transfer component is composed of a ferredoxin reductase (NdoR) and a ferredoxin (NdoA), and the dioxygenase component is formed of a heterohexamer (trimer of heterodimers) of three large alpha subunits (NdoB) and three small beta subunits (NdoC). [2Fe-2S] cluster is required as a cofactor.

Its pathway is aromatic compound metabolism; naphthalene degradation. Component of the naphthalene dioxygenase (NDO) multicomponent enzyme system which catalyzes the incorporation of both atoms of molecular oxygen into naphthalene to form cis-(1R,2S)-dihydroxy-1,2-dihydronaphthalene. Functions as an intermediate electron transfer protein via a specific interaction with iron sulfur protein components (ISP) (NdoB and NdoC). Also able to catalyze the cis-dihydroxylation of biphenyl and phenanthrene. The polypeptide is Naphthalene 1,2-dioxygenase system, ferredoxin component (Pseudomonas putida (Arthrobacter siderocapsulatus)).